The primary structure comprises 60 residues: Cecropin-B type 1 (60 aa).

The signal sequence occupies residues 1-24 (MNFNKLFALVLLIGLVLLTGQTEA). Isoleucine amide is present on I58.

The protein belongs to the cecropin family.

It localises to the secreted. Cecropins have lytic and antibacterial activity against several Gram-positive and Gram-negative bacteria. In Aedes albopictus (Asian tiger mosquito), this protein is Cecropin-B type 1 (CECB1).